A 325-amino-acid chain; its full sequence is tRNA dimethylallyltransferase (325 aa).

16-23 (GPTASGKT) is an ATP binding site. Residue 18 to 23 (TASGKT) coordinates substrate. Interaction with substrate tRNA regions lie at residues 41 to 44 (DSAL), 165 to 169 (QRIQR), 253 to 258 (RCVGYR), and 286 to 293 (KRQITWLR).

It belongs to the IPP transferase family. As to quaternary structure, monomer. The cofactor is Mg(2+).

It catalyses the reaction adenosine(37) in tRNA + dimethylallyl diphosphate = N(6)-dimethylallyladenosine(37) in tRNA + diphosphate. In terms of biological role, catalyzes the transfer of a dimethylallyl group onto the adenine at position 37 in tRNAs that read codons beginning with uridine, leading to the formation of N6-(dimethylallyl)adenosine (i(6)A). The polypeptide is tRNA dimethylallyltransferase (Ralstonia pickettii (strain 12J)).